Consider the following 3079-residue polypeptide: Inhibitory regulator protein IRA2 (3079 aa).

The segment at 392-554 (NQNAHQGSSS…RASYDAHKTG (163 aa)) is disordered. Positions 399-416 (SSSPSSSSPSSPPSSSSS) are enriched in low complexity. Over residues 417–442 (DNNNQNIIAKSLSRQLSHHQSYIQQQ) the composition is skewed to polar residues. Residues 449–477 (SSWTTNSQSSTSLSSSTSNSTTTDFSTHT) show a composition bias toward low complexity. The span at 488–497 (DTPTMSNITI) shows a compositional bias: polar residues. Low complexity predominate over residues 498–528 (SASSLLSQTPTPTTQLQQRLNSAAAAAAAAA). The segment covering 529–546 (SPSNSTPTGYTAEQQSRA) has biased composition (polar residues). Position 635 is a phosphothreonine (Thr-635). Disordered regions lie at residues 867–898 (FKGS…PLGL), 912–935 (GSST…LSSD), and 952–980 (GPSS…VQRP). Composition is skewed to low complexity over residues 873–894 (SLCS…TPVS) and 921–934 (NVNS…NLSS). Over residues 961–980 (IPTTLTSPPGTEKSSPVQRP) the composition is skewed to polar residues. The Ras-GAP domain maps to 1717-1922 (NATHIVVAQL…DRIFRFLAEL (206 aa)).

It localises to the cytoplasm. Its function is as follows. Inhibitory regulator of the Ras-cyclic AMP pathway. Stimulates the GTPase activity of Ras proteins. The sequence is that of Inhibitory regulator protein IRA2 (IRA2) from Saccharomyces cerevisiae (strain ATCC 204508 / S288c) (Baker's yeast).